The sequence spans 774 residues: 5-methyltetrahydropteroyltriglutamate--homocysteine methyltransferase (774 aa).

5-methyltetrahydropteroyltri-L-glutamate is bound by residues 24–27 and Lys120; that span reads RELK. L-homocysteine-binding positions include 446–448 and Glu499; that span reads IGS. L-methionine-binding positions include 446 to 448 and Glu499; that span reads IGS. Trp576 contributes to the 5-methyltetrahydropteroyltri-L-glutamate binding site. Residue Asp614 coordinates L-homocysteine. Asp614 is an L-methionine binding site. Glu620 serves as a coordination point for 5-methyltetrahydropteroyltri-L-glutamate. Residues His656, Cys658, and Glu680 each contribute to the Zn(2+) site. The active-site Proton donor is His709. Cys741 contributes to the Zn(2+) binding site.

Belongs to the vitamin-B12 independent methionine synthase family. The cofactor is Zn(2+).

It carries out the reaction 5-methyltetrahydropteroyltri-L-glutamate + L-homocysteine = tetrahydropteroyltri-L-glutamate + L-methionine. The protein operates within amino-acid biosynthesis; L-methionine biosynthesis via de novo pathway; L-methionine from L-homocysteine (MetE route): step 1/1. Its function is as follows. Catalyzes the transfer of a methyl group from 5-methyltetrahydrofolate to homocysteine resulting in methionine formation. The polypeptide is 5-methyltetrahydropteroyltriglutamate--homocysteine methyltransferase (Streptomyces griseus subsp. griseus (strain JCM 4626 / CBS 651.72 / NBRC 13350 / KCC S-0626 / ISP 5235)).